The primary structure comprises 175 residues: Adenine phosphoribosyltransferase (175 aa).

This sequence belongs to the purine/pyrimidine phosphoribosyltransferase family. In terms of assembly, homodimer.

The protein localises to the cytoplasm. It catalyses the reaction AMP + diphosphate = 5-phospho-alpha-D-ribose 1-diphosphate + adenine. The protein operates within purine metabolism; AMP biosynthesis via salvage pathway; AMP from adenine: step 1/1. In terms of biological role, catalyzes a salvage reaction resulting in the formation of AMP, that is energically less costly than de novo synthesis. The protein is Adenine phosphoribosyltransferase of Francisella tularensis subsp. tularensis (strain FSC 198).